Reading from the N-terminus, the 548-residue chain is Chaperonin GroEL 2 (548 aa).

Residues 29–32 (TLGP), 86–90 (DGTTT), Gly418, 482–484 (NAA), and Asp498 each bind ATP.

This sequence belongs to the chaperonin (HSP60) family. Forms a cylinder of 14 subunits composed of two heptameric rings stacked back-to-back. Interacts with the co-chaperonin GroES.

It is found in the cytoplasm. It catalyses the reaction ATP + H2O + a folded polypeptide = ADP + phosphate + an unfolded polypeptide.. Its function is as follows. Together with its co-chaperonin GroES, plays an essential role in assisting protein folding. The GroEL-GroES system forms a nano-cage that allows encapsulation of the non-native substrate proteins and provides a physical environment optimized to promote and accelerate protein folding. This chain is Chaperonin GroEL 2, found in Corynebacterium glutamicum (strain ATCC 13032 / DSM 20300 / JCM 1318 / BCRC 11384 / CCUG 27702 / LMG 3730 / NBRC 12168 / NCIMB 10025 / NRRL B-2784 / 534).